Reading from the N-terminus, the 193-residue chain is Lipopolysaccharide core heptose(II)-phosphate phosphatase (193 aa).

Residues 1 to 25 form the signal peptide; the sequence is MKLKKHVAVLLISFLCLIGLVTQHA.

Belongs to the phosphoglycerate mutase family. Ais subfamily.

Its subcellular location is the periplasm. It participates in bacterial outer membrane biogenesis; lipopolysaccharide metabolism. Its function is as follows. Catalyzes the dephosphorylation of heptose(II) of the outer membrane lipopolysaccharide core. The polypeptide is Lipopolysaccharide core heptose(II)-phosphate phosphatase (Escherichia fergusonii (strain ATCC 35469 / DSM 13698 / CCUG 18766 / IAM 14443 / JCM 21226 / LMG 7866 / NBRC 102419 / NCTC 12128 / CDC 0568-73)).